Reading from the N-terminus, the 637-residue chain is Chaperone protein DnaK (637 aa).

T198 carries the post-translational modification Phosphothreonine; by autocatalysis. The disordered stretch occupies residues 597–637; the sequence is MYQQQAEGDAARDAAQDAAKDDVVDAEFTEVDDDKNDKKSA. The segment covering 605–619 has biased composition (basic and acidic residues); sequence DAARDAAQDAAKDDV. Residues 620–630 show a composition bias toward acidic residues; sequence VDAEFTEVDDD.

This sequence belongs to the heat shock protein 70 family.

Its function is as follows. Acts as a chaperone. The chain is Chaperone protein DnaK from Afipia carboxidovorans (strain ATCC 49405 / DSM 1227 / KCTC 32145 / OM5) (Oligotropha carboxidovorans).